The chain runs to 102 residues: RNA-binding protein Hfq (102 aa).

Residues 9-68 enclose the Sm domain; sequence DPFVNALRRERVPVSIYLVNGIKLQGQIESFDQFVILLKNTVSQMVYKHAISTVVPSRPV. The interval 63-102 is disordered; it reads VPSRPVSHHSNNAGGGASNNYHHGSNAQGSTAQQDSEETE. Over residues 70–88 the composition is skewed to low complexity; it reads HHSNNAGGGASNNYHHGSN.

Belongs to the Hfq family. Homohexamer.

Its function is as follows. RNA chaperone that binds small regulatory RNA (sRNAs) and mRNAs to facilitate mRNA translational regulation in response to envelope stress, environmental stress and changes in metabolite concentrations. Also binds with high specificity to tRNAs. In Salmonella heidelberg (strain SL476), this protein is RNA-binding protein Hfq.